A 32-amino-acid polypeptide reads, in one-letter code: Acetolactate synthase, catabolic (32 aa).

Belongs to the TPP enzyme family. Homodimer.

It carries out the reaction 2 pyruvate + H(+) = (2S)-2-acetolactate + CO2. The protein operates within polyol metabolism; (R,R)-butane-2,3-diol biosynthesis; (R,R)-butane-2,3-diol from pyruvate: step 1/3. This is Acetolactate synthase, catabolic (budB) from Klebsiella aerogenes (Enterobacter aerogenes).